Reading from the N-terminus, the 486-residue chain is Endoglucanase 16 (486 aa).

The signal sequence occupies residues 1 to 30 (MANYKGRGNVMIRSMLLGLYGIINIVCVNG). N29 carries an N-linked (GlcNAc...) asparagine glycan. D87 functions as the Nucleophile in the catalytic mechanism. Active-site residues include H407, D458, and E467.

This sequence belongs to the glycosyl hydrolase 9 (cellulase E) family.

Its subcellular location is the secreted. It carries out the reaction Endohydrolysis of (1-&gt;4)-beta-D-glucosidic linkages in cellulose, lichenin and cereal beta-D-glucans.. In Arabidopsis thaliana (Mouse-ear cress), this protein is Endoglucanase 16.